We begin with the raw amino-acid sequence, 102 residues long: Large ribosomal subunit protein bL21 (102 aa).

It belongs to the bacterial ribosomal protein bL21 family. As to quaternary structure, part of the 50S ribosomal subunit. Contacts protein L20.

In terms of biological role, this protein binds to 23S rRNA in the presence of protein L20. This chain is Large ribosomal subunit protein bL21, found in Bifidobacterium animalis subsp. lactis (strain AD011).